The sequence spans 205 residues: dTTP/UTP pyrophosphatase (205 aa).

The active-site Proton acceptor is the aspartate 71.

It belongs to the Maf family. YhdE subfamily. The cofactor is a divalent metal cation.

The protein localises to the cytoplasm. It carries out the reaction dTTP + H2O = dTMP + diphosphate + H(+). It catalyses the reaction UTP + H2O = UMP + diphosphate + H(+). In terms of biological role, nucleoside triphosphate pyrophosphatase that hydrolyzes dTTP and UTP. May have a dual role in cell division arrest and in preventing the incorporation of modified nucleotides into cellular nucleic acids. The sequence is that of dTTP/UTP pyrophosphatase from Syntrophus aciditrophicus (strain SB).